Consider the following 499-residue polypeptide: Putative DBH-like monooxygenase protein 2 (499 aa).

An N-terminal signal peptide occupies residues 1–16 (MAHDLLFRLFPLLALG). Residues 40-156 (NVIFLRWDFD…NTVRVLAAYG (117 aa)) enclose the DOMON domain. The active site involves Tyr-209. Disulfide bonds link Cys-211-Cys-261 and Cys-248-Cys-271. The N-linked (GlcNAc...) asparagine glycan is linked to Asn-236. Positions 241 and 242 each coordinate Cu cation. Asn-250 is a glycosylation site (N-linked (GlcNAc...) asparagine). Positions 308, 389, and 391 each coordinate Cu cation. Intrachain disulfides connect Cys-365/Cys-480 and Cys-443/Cys-465. Residue His-389 is part of the active site. Asn-404 carries an N-linked (GlcNAc...) asparagine glycan. Residue Met-464 participates in Cu cation binding. A glycan (N-linked (GlcNAc...) asparagine) is linked at Asn-476.

Belongs to the copper type II ascorbate-dependent monooxygenase family. It depends on Cu(2+) as a cofactor.

The chain is Putative DBH-like monooxygenase protein 2 (MOXD2P) from Homo sapiens (Human).